The following is a 144-amino-acid chain: Large ribosomal subunit protein uL13 (144 aa).

It belongs to the universal ribosomal protein uL13 family. Part of the 50S ribosomal subunit.

Its function is as follows. This protein is one of the early assembly proteins of the 50S ribosomal subunit, although it is not seen to bind rRNA by itself. It is important during the early stages of 50S assembly. The polypeptide is Large ribosomal subunit protein uL13 (Clostridium botulinum (strain Alaska E43 / Type E3)).